The sequence spans 423 residues: F-box/LRR-repeat protein 2 (423 aa).

One can recognise an F-box domain in the interval Gly9–Ile55. LRR repeat units lie at residues Gln61–Gly87, Cys88–Gly113, Cys114–Ser139, Cys140–Trp165, Cys166–Gly191, Cys192–Ser217, Cys218–Gly243, Cys244–Arg269, Cys270–Glu295, Cys296–His321, Cys322–Asn350, Cys351–Asp375, and Cys376–Ala401. Residues Leu80–Gly90 are interaction with Calmodulin. Lys201 is covalently cross-linked (Glycyl lysine isopeptide (Lys-Gly) (interchain with G-Cter in ubiquitin)). A Phosphothreonine modification is found at Thr404. Cys420 carries S-geranylgeranyl cysteine lipidation. The CAAX motif signature appears at Cys420–Leu423.

Part of the SCF (SKP1-CUL1-F-box) E3 ubiquitin-protein ligase complex SCF(FBXL2) composed of CUL1, SKP1, RBX1 and FBXL2. Interacts with calmodulin; may antagonize substrate ubiquitination by SCF(FBXL2). May interact with PIK3R1. Interacts with PTPN13. Post-translationally, phosphorylated by GSK-beta (GSK3B), promoting recognition by FBXO3, leading to its ubiquitination by the SCF(FBXO3) complex. In terms of processing, ubiquitinated at Lys-201 by the SCF(FBXO3) complex in response to lipopolysaccharide (LPS), leading to its degradation by the proteasome.

It localises to the membrane. The protein operates within protein modification; protein ubiquitination. Its function is as follows. Calcium-activated substrate recognition component of the SCF (SKP1-cullin-F-box protein) E3 ubiquitin-protein ligase complex, SCF(FBXL2), which mediates the ubiquitination and subsequent proteasomal degradation of target proteins. Unlike many F-box proteins, FBXL2 does not seem to target phosphodegron within its substrates but rather calmodulin-binding motifs and is thereby antagonized by calmodulin. This is the case for the cyclins CCND2 and CCND3 which polyubiquitination and subsequent degradation are inhibited by calmodulin. Through CCND2 and CCND3 degradation induces cell-cycle arrest in G(0). SCF(FBXL2) also mediates PIK3R2 ubiquitination and proteasomal degradation thereby regulating phosphatidylinositol 3-kinase signaling and autophagy. PCYT1A monoubiquitination by SCF(FBXL2) and subsequent degradation regulates synthesis of phosphatidylcholine, which is utilized for formation of membranes and of pulmonary surfactant. The SCF(FBXL2) complex acts as a regulator of inflammation by mediating ubiquitination and degradation of TRAF proteins (TRAF1, TRAF2, TRAF3, TRAF4, TRAF5 and TRAF6). The SCF(FBXL2) complex acts as a negative regulator of the NLRP3 inflammasome by mediating ubiquitination and degradation of NLRP3. The sequence is that of F-box/LRR-repeat protein 2 from Bos taurus (Bovine).